We begin with the raw amino-acid sequence, 457 residues long: Siroheme synthase (457 aa).

A precorrin-2 dehydrogenase /sirohydrochlorin ferrochelatase region spans residues 1 to 204; it reads MDHLPIFCQL…NDQKAITETT (204 aa). NAD(+) contacts are provided by residues 22–23 and 43–44; these read DV and LA. Residue Ser-128 is modified to Phosphoserine. The interval 216–457 is uroporphyrinogen-III C-methyltransferase; it reads GEVVLVGAGP…RDKLNWFSNH (242 aa). An S-adenosyl-L-methionine-binding site is contributed by Pro-225. The Proton acceptor role is filled by Asp-248. Lys-270 serves as the catalytic Proton donor. Residues 301–303, Ile-306, 331–332, Met-382, and Gly-411 contribute to the S-adenosyl-L-methionine site; these read GGD and TA.

In the N-terminal section; belongs to the precorrin-2 dehydrogenase / sirohydrochlorin ferrochelatase family. The protein in the C-terminal section; belongs to the precorrin methyltransferase family.

The enzyme catalyses uroporphyrinogen III + 2 S-adenosyl-L-methionine = precorrin-2 + 2 S-adenosyl-L-homocysteine + H(+). It catalyses the reaction precorrin-2 + NAD(+) = sirohydrochlorin + NADH + 2 H(+). The catalysed reaction is siroheme + 2 H(+) = sirohydrochlorin + Fe(2+). It participates in cofactor biosynthesis; adenosylcobalamin biosynthesis; precorrin-2 from uroporphyrinogen III: step 1/1. Its pathway is cofactor biosynthesis; adenosylcobalamin biosynthesis; sirohydrochlorin from precorrin-2: step 1/1. The protein operates within porphyrin-containing compound metabolism; siroheme biosynthesis; precorrin-2 from uroporphyrinogen III: step 1/1. It functions in the pathway porphyrin-containing compound metabolism; siroheme biosynthesis; siroheme from sirohydrochlorin: step 1/1. It participates in porphyrin-containing compound metabolism; siroheme biosynthesis; sirohydrochlorin from precorrin-2: step 1/1. Multifunctional enzyme that catalyzes the SAM-dependent methylations of uroporphyrinogen III at position C-2 and C-7 to form precorrin-2 via precorrin-1. Then it catalyzes the NAD-dependent ring dehydrogenation of precorrin-2 to yield sirohydrochlorin. Finally, it catalyzes the ferrochelation of sirohydrochlorin to yield siroheme. The chain is Siroheme synthase from Escherichia coli (strain 55989 / EAEC).